The sequence spans 868 residues: E3 ubiquitin-protein ligase TRIM71 (868 aa).

Alanine 2 bears the N-acetylalanine mark. Residues 12–89 (CLLCKEMCGS…PLKLRCPVCD (78 aa)) form an RING-type zinc finger. A compositionally biased stretch (low complexity) spans 26–41 (SSNSSASSSSSQTSTS). Disordered stretches follow at residues 26 to 50 (SSNS…GGPG) and 121 to 186 (ADEP…GSPS). A compositionally biased stretch (basic residues) spans 142 to 153 (SNHRHHAHHAHP). Over residues 159–176 (APPPPLPPAPPPPAPPRS) the composition is skewed to pro residues. Low complexity predominate over residues 177–186 (APGGPAGSPS). The segment at 191-238 (RRPHGCSSCDEGNAASSRCLDCQEHLCDNCVRAHQRVRLTKDHYIERG) adopts a B box-type 1; atypical zinc-finger fold. Residues 273–314 (ERLGFCQHHDDEVLHLYCDTCSVPICRECTVGRHGGHSFVYL) form a B box-type 2 zinc finger. Zn(2+)-binding residues include cysteine 278, histidine 281, cysteine 301, and histidine 306. Residues 391–427 (QVKAKSLYLQVEKLRQNLNKLESTISAVQQVLEEGRA) are a coiled coil. A Filamin repeat occupies 479–580 (SSGAFAPLTK…IENSPFKVVV (102 aa)). NHL repeat units follow at residues 593 to 636 (GLSF…FKPC), 640 to 683 (HHKF…FTFE), 687 to 730 (LLKF…FGPD), 734 to 777 (LNKY…IHPD), 781 to 824 (ARFL…FESN), and 828 to 868 (LCKF…ILIF).

The protein belongs to the TRIM/RBCC family. As to quaternary structure, interacts (via NHL repeats) with AGO2; the interaction increases in presence of RNA. Interacts with HSP90AA1. Interacts (via NHL repeats) with MOV10, PABPC1, PUM1, PUM2, STAU2, XRN1 and XRN2 in an RNA-dependent manner. Interacts with SHCBP1; leading to enhance its stability. Post-translationally, autoubiquitinated.

The protein resides in the cytoplasm. Its subcellular location is the P-body. The catalysed reaction is S-ubiquitinyl-[E2 ubiquitin-conjugating enzyme]-L-cysteine + [acceptor protein]-L-lysine = [E2 ubiquitin-conjugating enzyme]-L-cysteine + N(6)-ubiquitinyl-[acceptor protein]-L-lysine.. Its pathway is protein modification; protein ubiquitination. Functionally, E3 ubiquitin-protein ligase that cooperates with the microRNAs (miRNAs) machinery and promotes embryonic stem cells proliferation and maintenance. Binds to miRNAs and associates with AGO2, participating in post-transcriptional repression of transcripts such as CDKN1A. In addition, participates in post-transcriptional mRNA repression in a miRNA independent mechanism. Facilitates the G1-S transition to promote rapid embryonic stem cell self-renewal by repressing CDKN1A expression. Required to maintain proliferation and prevent premature differentiation of neural progenitor cells during early neural development: positively regulates FGF signaling by controlling the stability of SHCBP1. Specific regulator of miRNA biogenesis. Binds to miRNA MIR29A hairpin and postranscriptionally modulates MIR29A levels, which indirectly regulates TET proteins expression. This Bos taurus (Bovine) protein is E3 ubiquitin-protein ligase TRIM71 (TRIM71).